Reading from the N-terminus, the 189-residue chain is UPF0301 protein PFL_5830 (189 aa).

This sequence belongs to the UPF0301 (AlgH) family.

The protein is UPF0301 protein PFL_5830 of Pseudomonas fluorescens (strain ATCC BAA-477 / NRRL B-23932 / Pf-5).